A 595-amino-acid polypeptide reads, in one-letter code: TNF receptor-associated factor family protein DDB_G0272348 (595 aa).

The tract at residues 14 to 64 (SFTNNNSNNNNNNNNNSNSNNNNNNNNNNINNNNNHNNNNKNNSNNKNEIN) is disordered. Positions 17-64 (NNNSNNNNNNNNNSNSNNNNNNNNNNINNNNNHNNNNKNNSNNKNEIN) are enriched in low complexity. The segment at 87-134 (CTICSDLLVNSFHADKFKAVQCKNGHYTTCLNCWEKHLEKKKNCIQCG) adopts an RING-type; degenerate zinc-finger fold. 2 consecutive TRAF-type zinc fingers follow at residues 189 to 253 (EHLK…INKE) and 254 to 311 (SHNA…SKLS). Residues 348–410 (LLNGQNKKIT…QQQQSQQQQQ (63 aa)) are a coiled coil. Over residues 409–440 (QQSQQQQQSQQSQQNNNSNSHFINNNNNNINN) the composition is skewed to low complexity. A disordered region spans residues 409–450 (QQSQQQQQSQQSQQNNNSNSHFINNNNNNINNVQMSDSPNGG). Polar residues predominate over residues 441–450 (VQMSDSPNGG). Positions 456–584 (VYKNKWVISN…NDSITIEIEI (129 aa)) constitute an MATH domain.

This sequence belongs to the TNF receptor-associated factor family. A subfamily.

It is found in the cytoplasm. In terms of biological role, probable adapter protein and signal transducer that links members of the tumor necrosis factor receptor family to different signaling pathways by association with the receptor cytoplasmic domain and kinases. The chain is TNF receptor-associated factor family protein DDB_G0272348 from Dictyostelium discoideum (Social amoeba).